The primary structure comprises 543 residues: Hydroxylamine reductase (543 aa).

[4Fe-4S] cluster contacts are provided by cysteine 5, cysteine 8, cysteine 17, and cysteine 23. Histidine 236, glutamate 260, cysteine 304, cysteine 398, cysteine 426, cysteine 451, glutamate 486, and lysine 488 together coordinate hybrid [4Fe-2O-2S] cluster. Residue cysteine 398 is modified to Cysteine persulfide.

Belongs to the HCP family. [4Fe-4S] cluster is required as a cofactor. The cofactor is hybrid [4Fe-2O-2S] cluster.

It localises to the cytoplasm. The catalysed reaction is A + NH4(+) + H2O = hydroxylamine + AH2 + H(+). In terms of biological role, catalyzes the reduction of hydroxylamine to form NH(3) and H(2)O. The polypeptide is Hydroxylamine reductase (Bacteroides thetaiotaomicron (strain ATCC 29148 / DSM 2079 / JCM 5827 / CCUG 10774 / NCTC 10582 / VPI-5482 / E50)).